We begin with the raw amino-acid sequence, 552 residues long: 5'-AMP-activated protein kinase catalytic subunit alpha-2 (552 aa).

Positions 16–268 (YVLGDTLGVG…IKDIREHEWF (253 aa)) constitute a Protein kinase domain. Residues 22-30 (LGVGTFGKV) and K45 contribute to the ATP site. Catalysis depends on D139, which acts as the Proton acceptor. The residue at position 172 (T172) is a Phosphothreonine; by LKB1 and CaMKK2. T258 is subject to Phosphothreonine. An AIS region spans residues 291-376 (EAVKEVCEKF…PERMPPLIAD (86 aa)). Position 377 is a phosphoserine (S377). Residues 477 to 521 (VEQRSGSSTPQRSCSAAGLHRPRSSFDSTTAESHSLSGSLTGSLT) form a disordered region. The span at 480 to 490 (RSGSSTPQRSC) shows a compositional bias: polar residues. S491 carries the phosphoserine modification. The span at 501–510 (SFDSTTAESH) shows a compositional bias: polar residues. Over residues 511-521 (SLSGSLTGSLT) the composition is skewed to low complexity.

It belongs to the protein kinase superfamily. CAMK Ser/Thr protein kinase family. SNF1 subfamily. AMPK is a heterotrimer of an alpha catalytic subunit (PRKAA1 or PRKAA2), a beta (PRKAB1 or PRKAB2) and a gamma non-catalytic subunits (PRKAG1, PRKAG2 or PRKAG3). Interacts with FNIP1 and FNIP2. Interacts with DUSP29. Interacts with ARF6. The phosphorylated form at Thr-172 mediated by CamKK2 interacts with ACSS2. Mg(2+) is required as a cofactor. In terms of processing, ubiquitinated. Post-translationally, phosphorylated at Thr-172 by STK11/LKB1 in complex with STE20-related adapter-alpha (STRADA) pseudo kinase and CAB39. Also phosphorylated at Thr-172 by CAMKK2; triggered by a rise in intracellular calcium ions, without detectable changes in the AMP/ATP ratio. CAMKK1 can also phosphorylate Thr-172, but at much lower level. Dephosphorylated by protein phosphatase 2A and 2C (PP2A and PP2C). Phosphorylated by ULK1; leading to negatively regulate AMPK activity and suggesting the existence of a regulatory feedback loop between ULK1 and AMPK. Dephosphorylated by PPM1A and PPM1B at Thr-172 (mediated by STK11/LKB1).

It localises to the cytoplasm. The protein resides in the nucleus. The catalysed reaction is L-seryl-[protein] + ATP = O-phospho-L-seryl-[protein] + ADP + H(+). The enzyme catalyses L-threonyl-[protein] + ATP = O-phospho-L-threonyl-[protein] + ADP + H(+). It carries out the reaction L-seryl-[acetyl-CoA carboxylase] + ATP = O-phospho-L-seryl-[acetyl-CoA carboxylase] + ADP + H(+). It catalyses the reaction L-seryl-[3-hydroxy-3-methylglutaryl-coenzyme A reductase] + ATP = O-phospho-L-seryl-[3-hydroxy-3-methylglutaryl-coenzyme A reductase] + ADP + H(+). With respect to regulation, activated by phosphorylation on Thr-172. Binding of AMP to non-catalytic gamma subunit (PRKAG1, PRKAG2 or PRKAG3) results in allosteric activation, inducing phosphorylation on Thr-172. AMP-binding to gamma subunit also sustains activity by preventing dephosphorylation of Thr-172. ADP also stimulates Thr-172 phosphorylation, without stimulating already phosphorylated AMPK. ATP promotes dephosphorylation of Thr-172, rendering the enzyme inactive. Under physiological conditions AMPK mainly exists in its inactive form in complex with ATP, which is much more abundant than AMP. Selectively inhibited by compound C (6-[4-(2-Piperidin-1-yl-ethoxy)-phenyl)]-3-pyridin-4-yl-pyyrazolo[1,5-a] pyrimidine. Activated by resveratrol, a natural polyphenol present in red wine, and S17834, a synthetic polyphenol. Salicylate/aspirin directly activates kinase activity, primarily by inhibiting Thr-172 dephosphorylation. Its function is as follows. Catalytic subunit of AMP-activated protein kinase (AMPK), an energy sensor protein kinase that plays a key role in regulating cellular energy metabolism. In response to reduction of intracellular ATP levels, AMPK activates energy-producing pathways and inhibits energy-consuming processes: inhibits protein, carbohydrate and lipid biosynthesis, as well as cell growth and proliferation. AMPK acts via direct phosphorylation of metabolic enzymes, and by longer-term effects via phosphorylation of transcription regulators. Regulates lipid synthesis by phosphorylating and inactivating lipid metabolic enzymes such as ACACA, ACACB, GYS1, HMGCR and LIPE; regulates fatty acid and cholesterol synthesis by phosphorylating acetyl-CoA carboxylase (ACACA and ACACB) and hormone-sensitive lipase (LIPE) enzymes, respectively. Promotes lipolysis of lipid droplets by mediating phosphorylation of isoform 1 of CHKA (CHKalpha2). Regulates insulin-signaling and glycolysis by phosphorylating IRS1, PFKFB2 and PFKFB3. Involved in insulin receptor/INSR internalization. AMPK stimulates glucose uptake in muscle by increasing the translocation of the glucose transporter SLC2A4/GLUT4 to the plasma membrane, possibly by mediating phosphorylation of TBC1D4/AS160. Regulates transcription and chromatin structure by phosphorylating transcription regulators involved in energy metabolism such as CRTC2/TORC2, FOXO3, histone H2B, HDAC5, MEF2C, MLXIPL/ChREBP, EP300, HNF4A, p53/TP53, SREBF1, SREBF2 and PPARGC1A. Acts as a key regulator of glucose homeostasis in liver by phosphorylating CRTC2/TORC2, leading to CRTC2/TORC2 sequestration in the cytoplasm. In response to stress, phosphorylates 'Ser-36' of histone H2B (H2BS36ph), leading to promote transcription. Acts as a key regulator of cell growth and proliferation by phosphorylating FNIP1, TSC2, RPTOR, WDR24 and ATG1/ULK1: in response to nutrient limitation, negatively regulates the mTORC1 complex by phosphorylating RPTOR component of the mTORC1 complex and by phosphorylating and activating TSC2. Also phosphorylates and inhibits GATOR2 subunit WDR24 in response to nutrient limitation, leading to suppress glucose-mediated mTORC1 activation. In response to energetic stress, phosphorylates FNIP1, inactivating the non-canonical mTORC1 signaling, thereby promoting nuclear translocation of TFEB and TFE3, and inducing transcription of lysosomal or autophagy genes. In response to nutrient limitation, promotes autophagy by phosphorylating and activating ATG1/ULK1. In that process also activates WDR45/WIPI4. Phosphorylates CASP6, thereby preventing its autoprocessing and subsequent activation. AMPK also acts as a regulator of circadian rhythm by mediating phosphorylation of CRY1, leading to destabilize it. May regulate the Wnt signaling pathway by phosphorylating CTNNB1, leading to stabilize it. Also acts as a regulator of cellular polarity by remodeling the actin cytoskeleton; probably by indirectly activating myosin. Also phosphorylates CFTR, EEF2K, KLC1, NOS3 and SLC12A1. Plays an important role in the differential regulation of pro-autophagy (composed of PIK3C3, BECN1, PIK3R4 and UVRAG or ATG14) and non-autophagy (composed of PIK3C3, BECN1 and PIK3R4) complexes, in response to glucose starvation. Can inhibit the non-autophagy complex by phosphorylating PIK3C3 and can activate the pro-autophagy complex by phosphorylating BECN1. Upon glucose starvation, promotes ARF6 activation in a kinase-independent manner leading to cell migration. Upon glucose deprivation mediates the phosphorylation of ACSS2 at 'Ser-659', which exposes the nuclear localization signal of ACSS2, required for its interaction with KPNA1 and nuclear translocation. Upon stress, regulates mitochondrial fragmentation through phosphorylation of MTFR1L. The chain is 5'-AMP-activated protein kinase catalytic subunit alpha-2 (PRKAA2) from Pongo abelii (Sumatran orangutan).